The sequence spans 1349 residues: Protein turtle homolog B (1349 aa).

A signal peptide spans 1–20; sequence MIWYVATFIASVIGTRGLAA. At 21–722 the chain is on the extracellular side; that stretch reads EGAHGLREEP…DLTEDGLARP (702 aa). Ig-like domains are found at residues 24–129, 139–226, 228–320, 324–415, and 420–504; these read HGLR…HNGS, PTFT…LLVQ, PPFI…AYLT, PARV…ARLV, and PYFT…THLT. 2 disulfide bridges follow: cysteine 45–cysteine 113 and cysteine 161–cysteine 208. N-linked (GlcNAc...) asparagine glycans are attached at residues asparagine 241 and asparagine 258. Intrachain disulfides connect cysteine 250–cysteine 303, cysteine 346–cysteine 397, and cysteine 442–cysteine 488. 2 consecutive Fibronectin type-III domains span residues 512–604 and 614–708; these read APGS…TLAF and LVTP…STDI. Asparagine 624 is a glycosylation site (N-linked (GlcNAc...) asparagine). The helical transmembrane segment at 723–743 threads the bilayer; that stretch reads VLAGIVATICFLAAAILFSTL. At 744 to 1349 the chain is on the cytoplasmic side; that stretch reads AACFVNKQRK…SPPERALSKL (606 aa). Disordered stretches follow at residues 758 to 817, 911 to 1081, and 1099 to 1349; these read RKKD…EKEL, QLTP…RGLP, and APKG…LSKL. A phosphoserine mark is found at serine 775, serine 783, and serine 794. Residues 911-921 are compositionally biased toward polar residues; that stretch reads QLTPLSSSQES. The span at 985–998 shows a compositional bias: low complexity; sequence VPEVGSPLSSVMSS. 3 stretches are compositionally biased toward polar residues: residues 1018 to 1033, 1129 to 1141, and 1199 to 1214; these read ENAS…TPTG, LVSQ…TSQG, and SRLS…SRTG. An Omega-N-methylarginine modification is found at arginine 1136. Serine 1207 and serine 1215 each carry phosphoserine. The segment covering 1251 to 1271 has biased composition (low complexity); it reads STPSTGSPSQSSRSGSPSYRP. Residues 1283 to 1292 show a composition bias toward pro residues; the sequence is PSPPPGPAPA.

This sequence belongs to the immunoglobulin superfamily. Turtle family. Found in a complex with MAGI2 and NLGN2, where it interacts with MAGI2 (via PDZ 5 and PDZ 6 domains). Post-translationally, N-glycosylated and sialylated. Not significantly O-glycosylated.

The protein resides in the postsynaptic cell membrane. It is found in the postsynaptic density. In terms of biological role, transmembrane protein which is abundantly expressed in interneurons, where it may regulate inhibitory synapse development. May mediate homophilic cell adhesion. This is Protein turtle homolog B (IGSF9B) from Homo sapiens (Human).